Reading from the N-terminus, the 196-residue chain is UMP-CMP kinase (196 aa).

Position 13-18 (13-18) interacts with ATP; it reads GAGKGT. At serine 33 the chain carries Phosphoserine. The segment at 33 to 63 is NMP; that stretch reads SAGELLRDERKNPDSQYGELIEKYIKDGKIV. Arginine 39 serves as a coordination point for a ribonucleoside 5'-phosphate. Lysine 43 and lysine 55 each carry N6-acetyllysine. A ribonucleoside 5'-phosphate is bound by residues 61–63 and 93–96; these read KIV and GFPR. Position 100 (asparagine 100) interacts with CMP. Lysine 106 bears the N6-succinyllysine mark. The LID stretch occupies residues 133 to 143; sequence ERGKSSGRSDD. ATP is bound at residue arginine 134. The a ribonucleoside 5'-phosphate site is built by arginine 140 and arginine 151. ATP is bound at residue lysine 179. Serine 180 bears the Phosphoserine mark.

This sequence belongs to the adenylate kinase family. UMP-CMP kinase subfamily. In terms of assembly, monomer. The cofactor is Mg(2+).

The protein localises to the nucleus. The protein resides in the cytoplasm. The catalysed reaction is CMP + ATP = CDP + ADP. It carries out the reaction dCMP + ATP = dCDP + ADP. The enzyme catalyses UMP + ATP = UDP + ADP. It catalyses the reaction a 2'-deoxyribonucleoside 5'-diphosphate + ATP = a 2'-deoxyribonucleoside 5'-triphosphate + ADP. The catalysed reaction is a ribonucleoside 5'-diphosphate + ATP = a ribonucleoside 5'-triphosphate + ADP. In terms of biological role, catalyzes the phosphorylation of pyrimidine nucleoside monophosphates at the expense of ATP. Plays an important role in de novo pyrimidine nucleotide biosynthesis. Has preference for UMP and CMP as phosphate acceptors. Also displays broad nucleoside diphosphate kinase activity. The protein is UMP-CMP kinase of Sus scrofa (Pig).